A 380-amino-acid chain; its full sequence is Probable protein phosphatase 2C 27 (380 aa).

The PPM-type phosphatase domain maps to Arg84–Phe344. Asp128, Gly129, Asp292, and Asp335 together coordinate Mn(2+).

The protein belongs to the PP2C family. Requires Mg(2+) as cofactor. Mn(2+) serves as cofactor. In terms of tissue distribution, expressed in roots, leaves, stems, flower, and trichomes.

Its subcellular location is the nucleus. It localises to the cytoplasm. It catalyses the reaction O-phospho-L-seryl-[protein] + H2O = L-seryl-[protein] + phosphate. The enzyme catalyses O-phospho-L-threonyl-[protein] + H2O = L-threonyl-[protein] + phosphate. Confers salt tolerance by triggering the expression of stress-responsive genes. This chain is Probable protein phosphatase 2C 27, found in Arabidopsis thaliana (Mouse-ear cress).